The chain runs to 1080 residues: DNA polymerase II large subunit (1080 aa).

Belongs to the archaeal DNA polymerase II family. Heterodimer of a large subunit and a small subunit.

It carries out the reaction DNA(n) + a 2'-deoxyribonucleoside 5'-triphosphate = DNA(n+1) + diphosphate. The catalysed reaction is Exonucleolytic cleavage in the 3'- to 5'-direction to yield nucleoside 5'-phosphates.. Functionally, possesses two activities: a DNA synthesis (polymerase) and an exonucleolytic activity that degrades single-stranded DNA in the 3'- to 5'-direction. Has a template-primer preference which is characteristic of a replicative DNA polymerase. This is DNA polymerase II large subunit from Picrophilus torridus (strain ATCC 700027 / DSM 9790 / JCM 10055 / NBRC 100828 / KAW 2/3).